Here is a 341-residue protein sequence, read N- to C-terminus: N-acetyl-gamma-glutamyl-phosphate reductase (341 aa).

Residue Cys-147 is part of the active site.

This sequence belongs to the NAGSA dehydrogenase family. Type 1 subfamily.

It is found in the cytoplasm. It carries out the reaction N-acetyl-L-glutamate 5-semialdehyde + phosphate + NADP(+) = N-acetyl-L-glutamyl 5-phosphate + NADPH + H(+). It functions in the pathway amino-acid biosynthesis; L-arginine biosynthesis; N(2)-acetyl-L-ornithine from L-glutamate: step 3/4. Catalyzes the NADPH-dependent reduction of N-acetyl-5-glutamyl phosphate to yield N-acetyl-L-glutamate 5-semialdehyde. The chain is N-acetyl-gamma-glutamyl-phosphate reductase from Staphylococcus epidermidis (strain ATCC 35984 / DSM 28319 / BCRC 17069 / CCUG 31568 / BM 3577 / RP62A).